Consider the following 217-residue polypeptide: UDP-N-acetylglucosamine transferase subunit ALG14 (217 aa).

Residues 1–3 (MLS) are Lumenal-facing. A helical transmembrane segment spans residues 4-26 (ILILAATAAGLVILLFQRLWTVL). At 27-217 (GPHHVTPRES…PKSVYLGRIV (191 aa)) the chain is on the cytoplasmic side.

Belongs to the ALG14 family. In terms of assembly, forms with ALG13 the active heterodimeric UDP-N-acetylglucosamine transferase complex.

It localises to the endoplasmic reticulum membrane. Functionally, part of the UDP-N-acetylglucosamine transferase complex that operates in the biosynthetic pathway of dolichol-linked oligosaccharides, the glycan precursors employed in protein asparagine (N)-glycosylation. The assembly of dolichol-linked oligosaccharides begins on the cytosolic side of the endoplasmic reticulum membrane and finishes in its lumen. The sequential addition of sugars to dolichol pyrophosphate produces dolichol-linked oligosaccharides containing fourteen sugars, including two GlcNAcs, nine mannoses and three glucoses. Once assembled, the oligosaccharides are transferred from the lipid to nascent proteins by oligosaccharyltransferases. Functions as a protein-membrane adapter recruiting ALG13 at the cytoplasmic face of the endoplasmic reticulum, where the complex catalyzes the second step of dolichol pyrophosphate biosynthesis, transferring a beta1,4-linked N-acetylglucosamine (GlcNAc) from UDP-GlcNAc to GlcNAc-pyrophosphatedolichol (Gn-PDol) to produce N,N'-diacetylchitobiosyl diphosphodolichol. N,N'-diacetylchitobiosyl diphosphodolichol is a substrate for ALG1, the following enzyme in the biosynthetic pathway. This is UDP-N-acetylglucosamine transferase subunit ALG14 from Mus musculus (Mouse).